The following is a 204-amino-acid chain: CASP-like protein 2U1 (204 aa).

The Cytoplasmic portion of the chain corresponds to 1 to 36; sequence MGVLGGDAHVPIGSQVSPGSVVVTNNESFGHRKLLK. The chain crosses the membrane as a helical span at residues 37 to 57; it reads GVDFLVRIKAFAFCLAVIVLL. Residues 58 to 84 are Extracellular-facing; sequence KNNVQTTVIAPGIVLQAKYNNTKAPVS. Asn-77 carries an N-linked (GlcNAc...) asparagine glycan. The chain crosses the membrane as a helical span at residues 85–105; sequence LLVLASICCGYAFLQAVVSLL. Topologically, residues 106–117 are cytoplasmic; it reads SFIRDKRVLNNT. A helical transmembrane segment spans residues 118–138; the sequence is VLAWLTFLLDQVLTYLLLGSA. The Extracellular portion of the chain corresponds to 139 to 170; that stretch reads AATAEAAYIAKRGEDKVQWKAVCGPFKRFCDH. A helical membrane pass occupies residues 171-191; sequence FAATVFLSFIAVIAFAVSAAI. Residues 192 to 204 are Cytoplasmic-facing; the sequence is SAYYLFRRSKGFK.

It belongs to the Casparian strip membrane proteins (CASP) family. Homodimer and heterodimers.

The protein localises to the cell membrane. This Selaginella moellendorffii (Spikemoss) protein is CASP-like protein 2U1.